Consider the following 273-residue polypeptide: Gamma-glutamyl cyclotransferase gliK (273 aa).

Residues 227-243 traverse the membrane as a helical segment; it reads WLGWIILTLYGLMWSYH.

It belongs to the class-I pyridoxal-phosphate-dependent aminotransferase family.

It is found in the membrane. The catalysed reaction is an alpha-(gamma-L-glutamyl)-L-amino acid = 5-oxo-L-proline + an L-alpha-amino acid. It functions in the pathway mycotoxin biosynthesis. In terms of biological role, gamma-glutamyl cyclotransferase-like protein; part of the gene cluster that mediates the biosynthesis of gliotoxin, a member of the epipolythiodioxopiperazine (ETP) class of toxins characterized by a disulfide bridged cyclic dipeptide. The first step in gliotoxin biosynthesis is the condensation of serine and phenylalanine to form the cyclo-L-phenylalanyl-L-serine diketopiperazine (DKP) by the NRPS gliP. GliP is also able to produce the DKP cyclo-L-tryptophanyl-L-serine, suggesting that the substrate specificity of the first adenylation (A) domain in gliP is sufficiently relaxed to accommodate both L-Phe and L-Trp. The cytochrome P450 monooxygenase gliC has been shown to catalyze the subsequent hydroxylation of the alpha-carbon of L-Phe in cyclo-L-phenylalanyl-L-serine whereas the second cytochrome P450 enzyme, gliF, is presumably involved in the modification of the DKP side chain. The glutathione S-transferase (GST) gliG then forms a bis-glutathionylated biosynthetic intermediate which is responsible for the sulfurization of gliotoxin. This bis-glutathionylated intermediate is subsequently processed by the gamma-glutamyl cyclotransferase gliK to remove both gamma-glutamyl moieties. Subsequent processing via gliI yields a biosynthetic intermediate, which is N-methylated via the N-methyltransferase gliN, before the gliotoxin oxidoreductase gliT-mediated disulfide bridge closure. GliN-mediated amide methylation confers stability to ETP, damping the spontaneous formation of tri- and tetrasulfides. Intracellular dithiol gliotoxin oxidized by gliT is subsequently effluxed by gliA. Gliotoxin contributes to pathogenesis during invasive aspergillosis. In macrophages and neutrophils, gliotoxin showed inhibition of various different cell functions including cytokine production, antigen presentation, phagocytosis, and production of reactive oxygen species. The chain is Gamma-glutamyl cyclotransferase gliK from Aspergillus fumigatus (strain ATCC MYA-4609 / CBS 101355 / FGSC A1100 / Af293) (Neosartorya fumigata).